The following is a 547-amino-acid chain: Chaperonin GroEL (547 aa).

ATP is bound by residues 30–33, Lys-51, 87–91, Gly-416, 480–482, and Asp-496; these read TLGP, DGTTT, and NAA.

It belongs to the chaperonin (HSP60) family. As to quaternary structure, forms a cylinder of 14 subunits composed of two heptameric rings stacked back-to-back. Interacts with the co-chaperonin GroES.

It localises to the cytoplasm. It catalyses the reaction ATP + H2O + a folded polypeptide = ADP + phosphate + an unfolded polypeptide.. Together with its co-chaperonin GroES, plays an essential role in assisting protein folding. The GroEL-GroES system forms a nano-cage that allows encapsulation of the non-native substrate proteins and provides a physical environment optimized to promote and accelerate protein folding. This Pseudoalteromonas translucida (strain TAC 125) protein is Chaperonin GroEL.